We begin with the raw amino-acid sequence, 185 residues long: Transcription factor bHLH109 (185 aa).

The region spanning 67-117 (RSMEYRMMMEKKRRKEIKDKVDILQGLMPNHCTKPDLASKLENIIEYIKSL) is the bHLH domain.

It belongs to the bHLH protein family. As to quaternary structure, homodimer.

Its subcellular location is the nucleus. Its function is as follows. Transcription factor involved in somatic embryogenesis. Acts as a positive regulator of somatic embryo formation. Acts as a positive regulator of ECP63 by targeting its promoter and inducing its expression. This chain is Transcription factor bHLH109 (BHLH109), found in Arabidopsis thaliana (Mouse-ear cress).